A 360-amino-acid chain; its full sequence is Catabolic L-serine/threonine dehydratase (360 aa).

Residue Ser2 is modified to N-acetylserine. Lys37 carries the N6-(pyridoxal phosphate)lysine modification.

Belongs to the serine/threonine dehydratase family. It depends on pyridoxal 5'-phosphate as a cofactor.

Its subcellular location is the mitochondrion. It catalyses the reaction L-serine = pyruvate + NH4(+). It carries out the reaction L-threonine = 2-oxobutanoate + NH4(+). The polypeptide is Catabolic L-serine/threonine dehydratase (CHA1) (Saccharomyces cerevisiae (strain ATCC 204508 / S288c) (Baker's yeast)).